Consider the following 386-residue polypeptide: RNA polymerase sigma factor SigA (386 aa).

The tract at residues Leu154–Thr224 is sigma-70 factor domain-2. Residues Asp178 to Gln181 carry the Interaction with polymerase core subunit RpoC motif. Positions Glu233–Tyr309 are sigma-70 factor domain-3. A sigma-70 factor domain-4 region spans residues Val322–His375. Residues Leu348–Ala367 constitute a DNA-binding region (H-T-H motif).

The protein belongs to the sigma-70 factor family. RpoD/SigA subfamily. In terms of assembly, interacts transiently with the RNA polymerase catalytic core.

The protein localises to the cytoplasm. Sigma factors are initiation factors that promote the attachment of RNA polymerase to specific initiation sites and are then released. This sigma factor is the primary sigma factor during exponential growth. The sequence is that of RNA polymerase sigma factor SigA from Lactococcus lactis subsp. lactis (strain IL1403) (Streptococcus lactis).